The sequence spans 91 residues: Cell division topological specificity factor (91 aa).

This sequence belongs to the MinE family.

Its function is as follows. Prevents the cell division inhibition by proteins MinC and MinD at internal division sites while permitting inhibition at polar sites. This ensures cell division at the proper site by restricting the formation of a division septum at the midpoint of the long axis of the cell. In Chloroflexus aggregans (strain MD-66 / DSM 9485), this protein is Cell division topological specificity factor.